Consider the following 542-residue polypeptide: Phosphoenolpyruvate carboxykinase (ATP) (542 aa).

The substrate site is built by arginine 67, tyrosine 208, and lysine 214. ATP contacts are provided by residues lysine 214, histidine 233, and 249–257 (GLSGTGKTT). 2 residues coordinate Mn(2+): lysine 214 and histidine 233. Aspartate 270 contacts Mn(2+). ATP contacts are provided by residues glutamate 298, arginine 334, 450-451 (RI), and threonine 456. Residue arginine 334 coordinates substrate.

This sequence belongs to the phosphoenolpyruvate carboxykinase (ATP) family. Monomer. It depends on Mn(2+) as a cofactor.

Its subcellular location is the cytoplasm. The catalysed reaction is oxaloacetate + ATP = phosphoenolpyruvate + ADP + CO2. Its pathway is carbohydrate biosynthesis; gluconeogenesis. Its function is as follows. Involved in the gluconeogenesis. Catalyzes the conversion of oxaloacetate (OAA) to phosphoenolpyruvate (PEP) through direct phosphoryl transfer between the nucleoside triphosphate and OAA. This Vibrio vulnificus (strain YJ016) protein is Phosphoenolpyruvate carboxykinase (ATP).